Reading from the N-terminus, the 352-residue chain is Invasion chromosome antigen T (352 aa).

It belongs to the IcaT/YfdF family.

The protein localises to the secreted. May contribute to pathogenesis, although some of its characteristics suggest it is a fossil gene. This is Invasion chromosome antigen T from Shigella flexneri serotype 5a (strain M90T).